We begin with the raw amino-acid sequence, 273 residues long: CUE domain-containing protein 2-A (273 aa).

Positions 92-121 are disordered; that stretch reads GKENVSPKPTAEVSFMTPTSSSTESSKKIE. Positions 135-178 constitute a CUE domain; that stretch reads DAKNGIDLLLEIFPSCTVSQAQTALSMAKGDLEDAVQIIVDGKV.

The protein belongs to the CUEDC2 family. Post-translationally, phosphorylated.

Its subcellular location is the cytoplasm. The protein localises to the nucleus. Its function is as follows. May play a role in targeting proteins for ubiquitination and subsequent proteasomal degradation. This is CUE domain-containing protein 2-A (cuedc2-a) from Xenopus laevis (African clawed frog).